We begin with the raw amino-acid sequence, 300 residues long: MEKTQETVQRILLEPYKYLLQLPGKQVRTKLSQAFNHWLKVPEDKLQIIIEVTEMLHNASLLIDDIEDNSKLRRGFPVAHSIYGIPSVINSANYVYFLGLEKVLTLDHPDAVKLFTRQLLELHQGQGLDIYWRDNYTCPTEEEYKAMVLQKTGGLFGLAVGLMQLFSDYKEDLKPLLNTLGLFFQIRDDYANLHSKEYSENKSFCEDLTEGKFSFPTIHAIWSRPESTQVQNILRQRTENIDIKKYCVHYLEDVGSFEYTRNTLKELEAKAYKQIDARGGNPELVALVKHLSKMFKEENE.

At methionine 1 the chain carries N-acetylmethionine. Residues lysine 25, arginine 28, and histidine 57 each contribute to the isopentenyl diphosphate site. Mg(2+)-binding residues include aspartate 64 and aspartate 68. Arginine 73 contributes to the dimethylallyl diphosphate binding site. Arginine 74 lines the isopentenyl diphosphate pocket. The dimethylallyl diphosphate site is built by lysine 151, threonine 152, glutamine 185, lysine 202, and lysine 212.

Belongs to the FPP/GGPP synthase family. Homohexamer; trimer of homodimers. Mg(2+) is required as a cofactor. Abundantly expressed in testis. Found in other tissues to a lower extent. Expressed in dermal fibroblast and skeletal muscle.

The protein resides in the cytoplasm. Its subcellular location is the perinuclear region. The protein localises to the myofibril. It localises to the sarcomere. It is found in the z line. The catalysed reaction is isopentenyl diphosphate + dimethylallyl diphosphate = (2E)-geranyl diphosphate + diphosphate. It carries out the reaction isopentenyl diphosphate + (2E)-geranyl diphosphate = (2E,6E)-farnesyl diphosphate + diphosphate. The enzyme catalyses isopentenyl diphosphate + (2E,6E)-farnesyl diphosphate = (2E,6E,10E)-geranylgeranyl diphosphate + diphosphate. It functions in the pathway isoprenoid biosynthesis; farnesyl diphosphate biosynthesis; farnesyl diphosphate from geranyl diphosphate and isopentenyl diphosphate: step 1/1. It participates in isoprenoid biosynthesis; geranyl diphosphate biosynthesis; geranyl diphosphate from dimethylallyl diphosphate and isopentenyl diphosphate: step 1/1. Its pathway is isoprenoid biosynthesis; geranylgeranyl diphosphate biosynthesis; geranylgeranyl diphosphate from farnesyl diphosphate and isopentenyl diphosphate: step 1/1. Subject to product inhibition by geranylgeranyl diphosphate. Its function is as follows. Catalyzes the trans-addition of the three molecules of IPP onto DMAPP to form geranylgeranyl pyrophosphate, an important precursor of carotenoids and geranylated proteins. In Homo sapiens (Human), this protein is Geranylgeranyl pyrophosphate synthase (GGPS1).